A 154-amino-acid chain; its full sequence is UPF0225 protein Spro_2712 (154 aa).

Belongs to the UPF0225 family.

This is UPF0225 protein Spro_2712 from Serratia proteamaculans (strain 568).